The sequence spans 425 residues: Histone-binding protein RBBP7 (425 aa).

N-acetylalanine is present on Ala2. At Ser3 the chain carries Phosphoserine. The residue at position 4 (Lys4) is an N6-acetyllysine; alternate. Residue Lys4 forms a Glycyl lysine isopeptide (Lys-Gly) (interchain with G-Cter in SUMO2); alternate linkage. Residue Lys4 forms a Glycyl lysine isopeptide (Lys-Gly) (interchain with G-Cter in ubiquitin); alternate linkage. Thr10 is modified (phosphothreonine). WD repeat units follow at residues Gln47–His122, Arg128–Arg173, Gly181–Asp217, Val228–Asp269, Val275–Phe312, Glu318–His369, and Ile376–Met403. Ser95 is modified (phosphoserine). Residue Lys101 forms a Glycyl lysine isopeptide (Lys-Gly) (interchain with G-Cter in SUMO2) linkage. Position 119 is an N6-acetyllysine (Lys119). Lys155 is covalently cross-linked (Glycyl lysine isopeptide (Lys-Gly) (interchain with G-Cter in SUMO2)). At Lys159 the chain carries N6-acetyllysine; alternate. Residue Lys159 forms a Glycyl lysine isopeptide (Lys-Gly) (interchain with G-Cter in SUMO2); alternate linkage. Residue Ser354 is modified to Phosphoserine.

This sequence belongs to the WD repeat RBAP46/RBAP48/MSI1 family. Binds directly to helix 1 of the histone fold of histone H4, a region that is not accessible when H4 is in chromatin. Subunit of the type B histone acetyltransferase (HAT) complex, composed of RBBP7 and HAT1. Subunit of the core histone deacetylase (HDAC) complex, which is composed of HDAC1, HDAC2, RBBP4 and RBBP7. The core HDAC complex associates with SIN3A, ARID4B/SAP180, SAP18, SAP30, SAP130, SUDS3/SAP45 and possibly ARID4A/RBP1 and ING1 to form the SIN3 HDAC complex. Component of the nucleosome remodeling and deacetylase (NuRD) repressor complex, composed of core proteins MTA1, MTA2, MTA3, RBBP4, RBBP7, HDAC1, HDAC2, MBD2, MBD3, and peripherally associated proteins CDK2AP1, CDK2AP2, GATAD2A, GATAD2B, CHD3, CHD4 and CHD5. The exact stoichiometry of the NuRD complex is unknown, and some subunits such as MBD2 and MBD3, GATAD2A and GATAD2B, and CHD3, CHD4 and CHD5 define mutually exclusive NuRD complexes. The NuRD complex may interact with MBD3L1. The NuRD complex may interact with MBD3L2. Subunit of the PRC2/EED-EZH2 complex, which is composed of at least EED, EZH2, RBBP4, RBBP7 and SUZ12. The PRC2/EED-EZH2 complex may also associate with HDAC1. Component of the NURF-1 ISWI chromatin remodeling complex (also called the nucleosome-remodeling factor (NURF) complex) at least composed of SMARCA1, BPTF, RBBP4 and RBBP7. Within the complex interacts with SMARCA1. Component of the BPFT-SMARCA1 complex at least composed of SMARCA1, BPFT, RBBP4 and RBBP7; the complex is catalytically inactive and does not remodel chromatin. Within the complex interacts with SMARCA1. Interacts with BRCA1. Interacts with CDK2AP1. Interacts with CENPA. Interacts with CHD3. Interacts with CHD4. Interacts with CREBBP, and this interaction may be enhanced by the binding of phosphorylated CREB1 to CREBBP. Interacts with HDAC7. Interacts with MTA1. Interacts with PWWP2B. Interacts with RB1 (via viral protein-binding domain). Interacts with SUV39H1. Higher levels in brain, thymus, lung, spleen, kidney, testis, and ovary/uterus; lower levels in heart, liver, and muscle.

It is found in the nucleus. Functionally, core histone-binding subunit that may target chromatin remodeling factors, histone acetyltransferases and histone deacetylases to their histone substrates in a manner that is regulated by nucleosomal DNA. Component of several complexes which regulate chromatin metabolism. These include the type B histone acetyltransferase (HAT) complex, which is required for chromatin assembly following DNA replication; the core histone deacetylase (HDAC) complex, which promotes histone deacetylation and consequent transcriptional repression; the nucleosome remodeling and histone deacetylase complex (the NuRD complex), which promotes transcriptional repression by histone deacetylation and nucleosome remodeling; and the PRC2/EED-EZH2 complex, which promotes repression of homeotic genes during development; and the NURF (nucleosome remodeling factor) complex. This is Histone-binding protein RBBP7 (Rbbp7) from Mus musculus (Mouse).